The sequence spans 149 residues: Ribosome-binding factor A (149 aa).

A disordered region spans residues 123–149 (LAKLREGAAPAGDADPYKTSSKSESEE).

It belongs to the RbfA family. As to quaternary structure, monomer. Binds 30S ribosomal subunits, but not 50S ribosomal subunits or 70S ribosomes.

Its subcellular location is the cytoplasm. One of several proteins that assist in the late maturation steps of the functional core of the 30S ribosomal subunit. Associates with free 30S ribosomal subunits (but not with 30S subunits that are part of 70S ribosomes or polysomes). Required for efficient processing of 16S rRNA. May interact with the 5'-terminal helix region of 16S rRNA. In Corynebacterium glutamicum (strain ATCC 13032 / DSM 20300 / JCM 1318 / BCRC 11384 / CCUG 27702 / LMG 3730 / NBRC 12168 / NCIMB 10025 / NRRL B-2784 / 534), this protein is Ribosome-binding factor A.